The primary structure comprises 347 residues: Hyaluronidase conohyal-ad1 (347 aa).

The signal sequence occupies residues 1-18; it reads MRAVVVVTGLVVVVVTTT. Positions 19–33 are excised as a propeptide; the sequence is LSLQDHDVKSASSPL. A disordered region spans residues 27 to 49; sequence KSASSPLSSSVDQGSSGDDCDEG. Over residues 28 to 43 the composition is skewed to low complexity; sequence SASSPLSSSVDQGSSG. Cys-67 and Cys-343 are disulfide-bonded. Glu-150 acts as the Proton donor in catalysis.

This sequence belongs to the glycosyl hydrolase 56 family. Contains 4 disulfide bonds. Post-translationally, is N-linked glycosylated at three positions. Expressed by the venom duct.

The protein localises to the secreted. It carries out the reaction Random hydrolysis of (1-&gt;4)-linkages between N-acetyl-beta-D-glucosamine and D-glucuronate residues in hyaluronate.. Functionally, hyaluronidase catalyzes the hydrolysis of hyaluronic acid (HA), an anionic, nonsulfated glycosaminoglycan distributed widely throughout connective, epithelial, and neural tissues. In venom, they are known to enhance diffusion of the venom by degrading the extracellular matrix. This is Hyaluronidase conohyal-ad1 from Conus adamsonii (Rhododendron cone).